We begin with the raw amino-acid sequence, 488 residues long: Alpha,alpha-trehalose-phosphate synthase [UDP-forming] 56 kDa subunit (488 aa).

Positions 102 and 156 each coordinate D-glucose 6-phosphate. The UDP site is built by R293 and K298. R293 and K298 together coordinate UDP-alpha-D-glucose. R331 is a binding site for D-glucose 6-phosphate. UDP contacts are provided by residues I370 and 396–400 (LVSYE). UDP-alpha-D-glucose contacts are provided by residues I370 and 392-400 (DGMNLVSYE).

Belongs to the glycosyltransferase 20 family. In terms of assembly, trehalose synthase/phosphatase complex contains three or four polypeptides of 56 kDa (TPS1), 102 kDa (TPS2), 115 kDa (TPS3) and 123 kDa (TSL1).

It catalyses the reaction D-glucose 6-phosphate + UDP-alpha-D-glucose = alpha,alpha-trehalose 6-phosphate + UDP + H(+). The protein operates within carbohydrate biosynthesis. Synthase catalytic subunit of the trehalose synthase complex that catalyzes the production of trehalose from glucose-6-phosphate and UDP-alpha-D-glucose in a two step process. Can function independently of the complex. The chain is Alpha,alpha-trehalose-phosphate synthase [UDP-forming] 56 kDa subunit from Kluyveromyces lactis (strain ATCC 8585 / CBS 2359 / DSM 70799 / NBRC 1267 / NRRL Y-1140 / WM37) (Yeast).